The primary structure comprises 92 residues: Acylphosphatase (92 aa).

An Acylphosphatase-like domain is found at 6-92 (RMYVIVYGIV…TGEFASFDTY (87 aa)). Active-site residues include arginine 21 and asparagine 39.

Belongs to the acylphosphatase family.

The catalysed reaction is an acyl phosphate + H2O = a carboxylate + phosphate + H(+). The sequence is that of Acylphosphatase (acyP) from Sulfolobus acidocaldarius (strain ATCC 33909 / DSM 639 / JCM 8929 / NBRC 15157 / NCIMB 11770).